The following is a 455-amino-acid chain: Bifunctional protein GlmU (455 aa).

The tract at residues 1–230 (MVNKNAIILA…FDESMGVNDR (230 aa)) is pyrophosphorylase. UDP-N-acetyl-alpha-D-glucosamine-binding positions include 9–12 (LAAG), lysine 23, glutamine 73, 78–79 (GT), 101–103 (SGD), glycine 140, glutamate 155, asparagine 170, and asparagine 228. Mg(2+) is bound at residue aspartate 103. Asparagine 228 lines the Mg(2+) pocket. Residues 231-251 (SALAKATKIMQKRINTQLMKD) form a linker region. Residues 252-455 (GVTLVDPETA…KPGYAKKLPW (204 aa)) form an N-acetyltransferase region. Positions 333 and 351 each coordinate UDP-N-acetyl-alpha-D-glucosamine. The Proton acceptor role is filled by histidine 363. Residues tyrosine 366 and asparagine 377 each contribute to the UDP-N-acetyl-alpha-D-glucosamine site. Residues 386 to 387 (NY), serine 405, alanine 423, and arginine 440 each bind acetyl-CoA.

In the N-terminal section; belongs to the N-acetylglucosamine-1-phosphate uridyltransferase family. The protein in the C-terminal section; belongs to the transferase hexapeptide repeat family. Homotrimer. Mg(2+) serves as cofactor.

It localises to the cytoplasm. The enzyme catalyses alpha-D-glucosamine 1-phosphate + acetyl-CoA = N-acetyl-alpha-D-glucosamine 1-phosphate + CoA + H(+). The catalysed reaction is N-acetyl-alpha-D-glucosamine 1-phosphate + UTP + H(+) = UDP-N-acetyl-alpha-D-glucosamine + diphosphate. The protein operates within nucleotide-sugar biosynthesis; UDP-N-acetyl-alpha-D-glucosamine biosynthesis; N-acetyl-alpha-D-glucosamine 1-phosphate from alpha-D-glucosamine 6-phosphate (route II): step 2/2. It functions in the pathway nucleotide-sugar biosynthesis; UDP-N-acetyl-alpha-D-glucosamine biosynthesis; UDP-N-acetyl-alpha-D-glucosamine from N-acetyl-alpha-D-glucosamine 1-phosphate: step 1/1. Its pathway is bacterial outer membrane biogenesis; LPS lipid A biosynthesis. Its function is as follows. Catalyzes the last two sequential reactions in the de novo biosynthetic pathway for UDP-N-acetylglucosamine (UDP-GlcNAc). The C-terminal domain catalyzes the transfer of acetyl group from acetyl coenzyme A to glucosamine-1-phosphate (GlcN-1-P) to produce N-acetylglucosamine-1-phosphate (GlcNAc-1-P), which is converted into UDP-GlcNAc by the transfer of uridine 5-monophosphate (from uridine 5-triphosphate), a reaction catalyzed by the N-terminal domain. The chain is Bifunctional protein GlmU from Limosilactobacillus fermentum (strain NBRC 3956 / LMG 18251) (Lactobacillus fermentum).